Reading from the N-terminus, the 421-residue chain is MAATLILEPAGRCCWDEPLRIAVRGLAPEQPVTLRTSLRDEEGALFRAHARYRADARDELDLERAPALGGSFAGLQPMGLLWALEPEKALVRLVKRDVRTPFAVELEVLDGHDTEPGRLLCLAQNKRDFLRPGVRREPVRAGPVRAALFLPPDEGPFPGIIDLFGSSRGLCEYRASLLAGHGFAVLALAYFRFEDLPEDLNDVHLEYFEEAVDFMLQHPKVKGPSIALLGFSKGGDLCLSMASFLKGITATVLINACVANTVAPLHYKDMIIPKLVDDLGKVKITKSGFLTFMDTWSNPLEEHNHQSLVPLEKAQVPFLFIVGMDDQSWKSEFYAQIASERLQAHGKERPQIICYPETGHCIDPPYFPPSRASVHAVLGEAIFYGGEPKAHSKAQVDAWQQIQTFFHKHLNGKKSVKHSKI.

Catalysis depends on charge relay system residues Ser232, Asp326, and His360. Residues 419–421 (SKI) carry the Peroxisome targeting signal motif.

The protein belongs to the C/M/P thioester hydrolase family.

The protein localises to the peroxisome. The protein resides in the cytoplasm. It carries out the reaction pristanoyl-CoA + H2O = 2,6,10,14-tetramethylpentadecanoate + CoA + H(+). It catalyses the reaction phytanoyl-CoA + H2O = 3,7,11,15-tetramethylhexadecanoate + CoA + H(+). It participates in lipid metabolism; fatty acid metabolism. Catalyzes the hydrolysis of acyl-CoAs into free fatty acids and coenzyme A (CoASH), regulating their respective intracellular levels. Catalyzes the hydrolysis of phytanoyl-CoA and pristanoyl-CoA, two methyl-branched fatty acids derived from phytol, that enter the body via the diet. This chain is Acyl-coenzyme A thioesterase 6, found in Homo sapiens (Human).